The following is a 420-amino-acid chain: MNIFNKNLHETDKEINEIIKHEKLRQSSVIELIASENFVSPAVLEAQGSLLTNKYAEGYPSKRFYNGCEEVDKAENLAIERVKKLFNCKYANVQPHSGSQANQAVYLALLQPGDTVLGMSLDSGGHLTHGAAPNMSGKWFNVVSYSVNKETYLIDYDEIERLADLHKPKLLIAGFSAYPRNIDFAKFREIVDKVGAYFMADIAHIAGLVATGEHQSPIPYAHAVTSTTHKTLRGPRGGLILSNDEEIGQKINSALFPGLQGGPLMHIIAAKAVAFLENLQPEYKSYIQQVISNAKALASSLQERGYDILTGGTDNHIVLVDLRKDGITGKFAANSLDRAGITCNKNAIPFDETSPFITSGIRLGTPACTTRGFKEKDFVLVGYMVADILDGLKNNEDNSDLEQKVLNEVTKLIKLFPFYG.

(6S)-5,6,7,8-tetrahydrofolate contacts are provided by residues Leu-121 and 125-127 (GHL). Lys-230 bears the N6-(pyridoxal phosphate)lysine mark. (6S)-5,6,7,8-tetrahydrofolate-binding positions include Glu-246 and 354–356 (SPF).

The protein belongs to the SHMT family. As to quaternary structure, homodimer. Requires pyridoxal 5'-phosphate as cofactor.

It is found in the cytoplasm. It carries out the reaction (6R)-5,10-methylene-5,6,7,8-tetrahydrofolate + glycine + H2O = (6S)-5,6,7,8-tetrahydrofolate + L-serine. It functions in the pathway one-carbon metabolism; tetrahydrofolate interconversion. It participates in amino-acid biosynthesis; glycine biosynthesis; glycine from L-serine: step 1/1. In terms of biological role, catalyzes the reversible interconversion of serine and glycine with tetrahydrofolate (THF) serving as the one-carbon carrier. This reaction serves as the major source of one-carbon groups required for the biosynthesis of purines, thymidylate, methionine, and other important biomolecules. Also exhibits THF-independent aldolase activity toward beta-hydroxyamino acids, producing glycine and aldehydes, via a retro-aldol mechanism. The polypeptide is Serine hydroxymethyltransferase (Rickettsia massiliae (strain Mtu5)).